Reading from the N-terminus, the 135-residue chain is Histone H3 type 2 (135 aa).

The segment at 1 to 40 is disordered; that stretch reads MARTKQTARKSTGGKAPRKQLATKAARKTPATGGVKKPHR. Residue K5 is modified to N6-methyllysine. An N6-acetyllysine; alternate modification is found at K10. An N6-methyllysine; alternate modification is found at K10. S11 carries the post-translational modification Phosphoserine. Residue T12 is modified to Phosphothreonine. Residues K15, K19, and K24 each carry the N6-acetyllysine modification. K28 carries the N6-acetyllysine; alternate modification. Residue K28 is modified to N6-methyllysine; alternate. 2 positions are modified to N6-methyllysine: K36 and K37.

This sequence belongs to the histone H3 family. In terms of assembly, the nucleosome is a histone octamer containing two molecules each of H2A, H2B, H3 and H4 assembled in one H3-H4 heterotetramer and two H2A-H2B heterodimers. The octamer wraps approximately 147 bp of DNA. In terms of processing, acetylation is generally linked to gene activation. Acetylated to form H3K9ac (11%), H3K14ac (17%), H3K18ac (11%), H3K23ac (16%) and H3K27ac (7%). H3K4, H3K35 and H3K36 are not acetylated. H3K4me prevents acetylation. 32% of the histone H3 are acetylated with, on average, 2.4 acetyl-Lys. They are all continuously deacatylated and re-acetylated with a half-life of approximately 2 minutes. Post-translationally, monomethylated to form H3K4me1 (81%), H3K9me1 (16%), H3K27me1 (25%), H3K35me1 (25%) and H3K36me1 (5%). No methylation at H3K14, H3K18 and H3K23. Methylated by a protein complex that includes Mut11. Set1 methylates specifically H3K4. H3K4me1 is associated with silenced euchromatin. Set3 forms H3K9me1, while H3K9me2 is undetected. H3K9me1 is specifically associated with silent, multi-copy transgenes. No phosphorylation detected.

It localises to the nucleus. Its subcellular location is the chromosome. Its function is as follows. Core component of nucleosome. Nucleosomes wrap and compact DNA into chromatin, limiting DNA accessibility to the cellular machineries which require DNA as a template. Histones thereby play a central role in transcription regulation, DNA repair, DNA replication and chromosomal stability. DNA accessibility is regulated via a complex set of post-translational modifications of histones, also called histone code, and nucleosome remodeling. This Chlamydomonas reinhardtii (Chlamydomonas smithii) protein is Histone H3 type 2 (ch3-II).